A 256-amino-acid chain; its full sequence is Probable septum site-determining protein MinC (256 aa).

Residues 105–143 are disordered; the sequence is RRGATAKPEPADEAEPPVAAAAAEAVPEPAPELAPSAPT. A compositionally biased stretch (low complexity) spans 120 to 142; the sequence is PPVAAAAAEAVPEPAPELAPSAP.

The protein belongs to the MinC family. Interacts with MinD and FtsZ.

Its function is as follows. Cell division inhibitor that blocks the formation of polar Z ring septums. Rapidly oscillates between the poles of the cell to destabilize FtsZ filaments that have formed before they mature into polar Z rings. Prevents FtsZ polymerization. This is Probable septum site-determining protein MinC from Burkholderia vietnamiensis (strain G4 / LMG 22486) (Burkholderia cepacia (strain R1808)).